The sequence spans 82 residues: Delta-conotoxin SVIE (82 aa).

The N-terminal stretch at 1-22 is a signal peptide; it reads MKLTCVMIVAVLFLTTWTFVTA. A propeptide spanning residues 23–51 is cleaved from the precursor; the sequence is DDSRYGLKNLFPKARHEMKNPEASKLNKR. 3 disulfide bridges follow: cysteine 54-cysteine 69, cysteine 61-cysteine 73, and cysteine 68-cysteine 77. A 4-hydroxyproline modification is found at proline 65.

It belongs to the conotoxin O1 superfamily. As to expression, expressed by the venom duct.

It localises to the secreted. Delta-conotoxins bind to site 6 of voltage-gated sodium channels (Nav) and inhibit the inactivation process. Impairs rapid channel inactivation of Nav1.4/SCN4A (Kd=500 nM). Interacts with a conserved hydrophobic triad (YFV) in the domain-4 voltage sensor of sodium channels. In vivo, injection of both native or synthetic peptide induces twitching of back limbs, running in circles, and spastic paralysis. In Conus striatus (Striated cone), this protein is Delta-conotoxin SVIE (SO6).